Here is a 2188-residue protein sequence, read N- to C-terminus: Genome polyprotein (2188 aa).

Gly-2 carries N-myristoyl glycine; by host lipidation. Residues 2–1503 (GAQVTRQQTG…HISRAFITLQ (1502 aa)) lie on the Cytoplasmic side of the membrane. Positions 408, 412, 548, 549, 550, 834, 838, and 839 each coordinate N-acetylneuraminate. Catalysis depends on for protease 2A activity residues His-879 and Asp-897. Residues Cys-914 and Cys-916 each coordinate Zn(2+). Residue Cys-968 is the For protease 2A activity of the active site. The Zn(2+) site is built by Cys-974 and His-976. The tract at residues 1108 to 1180 (SESWLKKFTE…EHSCPTTERQ (73 aa)) is membrane-binding. Residues 1108-1246 (SESWLKKFTE…SPGTGKSVAS (139 aa)) form an oligomerization region. The RNA-binding stretch occupies residues 1129–1133 (SQKID). The SF3 helicase domain maps to 1212–1370 (EKKINNYIQF…YKDSNKLDMS (159 aa)). Residue 1236–1243 (GSPGTGKS) participates in ATP binding. 3 residues coordinate Zn(2+): Cys-1376, Cys-1389, and Cys-1394. Residues 1376–1394 (CKPDNCTPTNYKRCCPLIC) form a C4-type; degenerate zinc finger. The interval 1421 to 1428 (EYRTRNST) is RNA-binding. Residues 1432–1437 (LEALFQ) are oligomerization. Residues 1504–1519 (AIATFVSIAGVVYVIY) lie within the membrane without spanning it. The Cytoplasmic segment spans residues 1520–2188 (KLFAGIQGPY…SLRRKWLDSF (669 aa)). The residue at position 1529 (Tyr-1529) is an O-(5'-phospho-RNA)-tyrosine. One can recognise a Peptidase C3 domain in the interval 1549 to 1727 (GPGFDFAQAI…FAAMLLHSYF (179 aa)). Active-site for protease 3C activity residues include His-1588, Glu-1619, and Cys-1695. Residues 1954-2069 (GEIFAFDYTG…SYPHKIDPGL (116 aa)) enclose the RdRp catalytic domain. Asp-1960 and Asp-2055 together coordinate Mg(2+).

This sequence belongs to the picornaviruses polyprotein family. In terms of assembly, interacts with capsid protein VP1 and capsid protein VP3 to form heterotrimeric protomers. Interacts with capsid protein VP0, and capsid protein VP3 to form heterotrimeric protomers. Five protomers subsequently associate to form pentamers which serve as building blocks for the capsid. Interacts with capsid protein VP2, capsid protein VP3 and capsid protein VP4 following cleavage of capsid protein VP0. As to quaternary structure, interacts with capsid protein VP1 and capsid protein VP3 in the mature capsid. In terms of assembly, interacts with capsid protein VP0 and capsid protein VP1 to form heterotrimeric protomers. Five protomers subsequently associate to form pentamers which serve as building blocks for the capsid. Interacts with capsid protein VP4 in the mature capsid. Interacts with protein 2C; this interaction may be important for virion morphogenesis. Interacts with host IRF7. Interacts with capsid protein VP1 and capsid protein VP3. As to quaternary structure, homodimer. In terms of assembly, homohexamer; forms a hexameric ring structure with 6-fold symmetry characteristic of AAA+ ATPases. Interacts (via N-terminus) with host RTN3 (via reticulon domain); this interaction is important for viral replication. Interacts with capsid protein VP3; this interaction may be important for virion morphogenesis. Interacts with protein 3CD. As to quaternary structure, homodimer. Interacts with host GBF1. Interacts (via GOLD domain) with host ACBD3 (via GOLD domain); this interaction allows the formation of a viral protein 3A/ACBD3 heterotetramer with a 2:2 stoichiometry, which will stimulate the recruitment of host PI4KB in order to synthesize PI4P at the viral RNA replication sites. In terms of assembly, interacts with RNA-directed RNA polymerase. Interacts with host IFIH1/MDA5; this interaction inhibits host IFIH1. As to quaternary structure, interacts with protein 3AB and with RNA-directed RNA polymerase. In terms of assembly, interacts with Viral protein genome-linked and with protein 3CD. Mg(2+) is required as a cofactor. Specific enzymatic cleavages in vivo by the viral proteases yield processing intermediates and the mature proteins. In terms of processing, myristoylation is required for the formation of pentamers during virus assembly. Further assembly of 12 pentamers and a molecule of genomic RNA generates the provirion. Post-translationally, during virion maturation, immature virions are rendered infectious following cleavage of VP0 into VP4 and VP2. This maturation seems to be an autocatalytic event triggered by the presence of RNA in the capsid and it is followed by a conformational change infectious virion. Myristoylation is required during RNA encapsidation and formation of the mature virus particle. In terms of processing, VPg is uridylylated by the polymerase into VPg-pUpU. This acts as a nucleotide-peptide primer for the genomic RNA replication.

The protein resides in the virion. The protein localises to the host cytoplasm. It localises to the host cytoplasmic vesicle membrane. It is found in the host nucleus. The enzyme catalyses a ribonucleoside 5'-triphosphate + H2O = a ribonucleoside 5'-diphosphate + phosphate + H(+). It catalyses the reaction Selective cleavage of Tyr-|-Gly bond in the picornavirus polyprotein.. The catalysed reaction is RNA(n) + a ribonucleoside 5'-triphosphate = RNA(n+1) + diphosphate. It carries out the reaction Selective cleavage of Gln-|-Gly bond in the poliovirus polyprotein. In other picornavirus reactions Glu may be substituted for Gln, and Ser or Thr for Gly.. Its function is as follows. Component of immature procapsids, which is cleaved into capsid proteins VP4 and VP2 after maturation. Allows the capsid to remain inactive before the maturation step. Forms an icosahedral capsid of pseudo T=3 symmetry with capsid proteins VP2 and VP3. The capsid is 300 Angstroms in diameter, composed of 60 copies of each capsid protein and enclosing the viral positive strand RNA genome. Capsid protein VP1 mainly forms the vertices of the capsid. Capsid protein VP1, together with VP3, interacts with host cell sialic acids to provide virion attachment to target host cells. This attachment induces virion internalization. After binding to its receptor, the capsid undergoes conformational changes. Capsid protein VP1 N-terminus (that contains an amphipathic alpha-helix) and capsid protein VP4 are externalized. Together, they shape a pore in the host membrane through which viral genome is translocated to host cell cytoplasm. Functionally, forms an icosahedral capsid of pseudo T=3 symmetry with capsid proteins VP2 and VP3. The capsid is 300 Angstroms in diameter, composed of 60 copies of each capsid protein and enclosing the viral positive strand RNA genome. In terms of biological role, forms an icosahedral capsid of pseudo T=3 symmetry with capsid proteins VP2 and VP3. The capsid is 300 Angstroms in diameter, composed of 60 copies of each capsid protein and enclosing the viral positive strand RNA genome. Capsid protein VP3, together with VP1, interacts with host cell sialic acids to provide virion attachment to target host cells. In addition, inhibits the phosphorylation and nuclear translocation of host IRF7 and thereby suppresses downstream interferon production. Its function is as follows. Lies on the inner surface of the capsid shell. After binding to the host receptor, the capsid undergoes conformational changes. Capsid protein VP4 is released, Capsid protein VP1 N-terminus is externalized, and together, they shape a pore in the host membrane through which the viral genome is translocated into the host cell cytoplasm. Cysteine protease that cleaves viral polyprotein and specific host proteins. It is responsible for the autocatalytic cleavage between the P1 and P2 regions, which is the first cleavage occurring in the polyprotein. Also cleaves the host translation initiation factor EIF4G1, in order to shut down the capped cellular mRNA translation. Inhibits the host nucleus-cytoplasm protein and RNA trafficking by cleaving host members of the nuclear pores. Counteracts stress granule formation probably by antagonizing its assembly or promoting its dissassembly. Also plays a role in the suppression of host innate immunity through cleavage of host TRAF3, a component of the signaling cascade required to produce type I interferons. Functionally, plays an essential role in the virus replication cycle by acting as a viroporin. Creates a pore in the host endoplasmic reticulum and as a consequence releases Ca2+ in the cytoplasm of infected cell. In turn, high levels of cytoplasmic calcium may trigger membrane trafficking and transport of viral ER-associated proteins to viroplasms, sites of viral genome replication. In terms of biological role, induces and associates with structural rearrangements of intracellular membranes. Displays RNA-binding, nucleotide binding and NTPase activities. May play a role in virion morphogenesis and viral RNA encapsidation by interacting with the capsid protein VP3. Its function is as follows. Localizes the viral replication complex to the surface of membranous vesicles. Together with protein 3CD binds the Cis-Active RNA Element (CRE) which is involved in RNA synthesis initiation. Acts as a cofactor to stimulate the activity of 3D polymerase, maybe through a nucleid acid chaperone activity. Localizes the viral replication complex to the surface of membranous vesicles. It inhibits host cell endoplasmic reticulum-to-Golgi apparatus transport and causes the disassembly of the Golgi complex, possibly through GBF1 interaction. This would result in depletion of MHC, trail receptors and IFN receptors at the host cell surface. Plays an essential role in viral RNA replication by recruiting ACBD3 and PI4KB at the viral replication sites, thereby allowing the formation of the rearranged membranous structures where viral replication takes place. Functionally, acts as a primer for viral RNA replication and remains covalently bound to viral genomic RNA. VPg is uridylylated prior to priming replication into VPg-pUpU. The oriI viral genomic sequence may act as a template for this. The VPg-pUpU is then used as primer on the genomic RNA poly(A) by the RNA-dependent RNA polymerase to replicate the viral genome. During genome replication, the VPg-RNA linkage is removed by the host TDP2, thereby accelerating replication. During the late stage of the replication cycle, host TDP2 is excluded from sites of viral RNA synthesis and encapsidation, allowing for the generation of progeny virions. In terms of biological role, involved in the viral replication complex and viral polypeptide maturation. It exhibits protease activity with a specificity and catalytic efficiency that is different from protease 3C. Protein 3CD lacks polymerase activity. Protein 3CD binds to the 5'UTR of the viral genome. Its function is as follows. Major viral protease that mediates proteolytic processing of the polyprotein. Cleaves host EIF5B, contributing to host translation shutoff. Also cleaves host PABPC1, contributing to host translation shutoff. Binds and inhibits host IFIH1/MDA5, thereby inhibiting the type-I IFN production and the establishment of the antiviral state. Cleaves host MAP3K7/TAK1, resulting in inhibition of TRAF6-triggered NF-kappa-B induction. Cleaves host TICAM1; this interaction allows the virus to disrupt host TLR3 signaling. Cleaves host IRF7, resulting in inhibition of type-I IFN production. Cleaves host NLRP1, triggers host N-glycine-mediated degradation of the autoinhibitory NLRP1 N-terminal fragment. Replicates the viral genomic RNA on the surface of intracellular membranes. May form linear arrays of subunits that propagate along a strong head-to-tail interaction called interface-I. Covalently attaches UMP to a tyrosine of VPg, which is used to prime RNA synthesis. The positive stranded RNA genome is first replicated at virus induced membranous vesicles, creating a dsRNA genomic replication form. This dsRNA is then used as template to synthesize positive stranded RNA genomes. ss(+)RNA genomes are either translated, replicated or encapsidated. This Human enterovirus D68 (EV68) protein is Genome polyprotein.